Consider the following 332-residue polypeptide: Large ribosomal subunit protein mL44 (332 aa).

A mitochondrion-targeting transit peptide spans 1–30 (MASGLVRLLQQGHRCLLAPVAPKLVPPVRG). Positions 86–228 (DLLKTAFVNS…LITQMTGKEL (143 aa)) constitute an RNase III domain. In terms of domain architecture, DRBM spans 236–306 (NPMGLLVEEL…ARVALRKLYG (71 aa)).

The protein belongs to the ribonuclease III family. Mitochondrion-specific ribosomal protein mL44 subfamily. In terms of assembly, component of the mitochondrial large ribosomal subunit (mt-LSU). Mature mammalian 55S mitochondrial ribosomes consist of a small (28S) and a large (39S) subunit. The 28S small subunit contains a 12S ribosomal RNA (12S mt-rRNA) and 30 different proteins. The 39S large subunit contains a 16S rRNA (16S mt-rRNA), a copy of mitochondrial valine transfer RNA (mt-tRNA(Val)), which plays an integral structural role, and 52 different proteins.

Its subcellular location is the mitochondrion. Functionally, component of the 39S subunit of mitochondrial ribosome. May have a function in the assembly/stability of nascent mitochondrial polypeptides exiting the ribosome. This is Large ribosomal subunit protein mL44 (MRPL44) from Homo sapiens (Human).